An 84-amino-acid chain; its full sequence is Delta-conotoxin-like MVIB (84 aa).

The N-terminal stretch at 1–22 is a signal peptide; that stretch reads MKLTCVMIVAVLFLTAWTFVTA. A propeptide spanning residues 23 to 51 is cleaved from the precursor; that stretch reads DDSRYGLKDLFPKERHEMKNPEASKLNQR. Cystine bridges form between cysteine 54/cysteine 69, cysteine 61/cysteine 73, and cysteine 68/cysteine 77. A 4-hydroxyproline modification is found at proline 65. Serine amide is present on serine 83.

It belongs to the conotoxin O1 superfamily. As to expression, expressed by the venom duct.

The protein resides in the secreted. Delta-conotoxins bind to site 6 of voltage-gated sodium channels (Nav) and inhibit the inactivation process. In Conus magus (Magical cone), this protein is Delta-conotoxin-like MVIB.